Consider the following 610-residue polypeptide: Alpha-fetoprotein (610 aa).

The first 18 residues, 1-18 (MKWVVSFFLLFLLNFSDS), serve as a signal peptide directing secretion. Albumin domains lie at 19 to 210 (RTMH…TSIT), 211 to 403 (KELR…EELE), and 404 to 602 (KYIQ…ALIS). Cu(2+) is bound at residue histidine 22. Intrachain disulfides connect cysteine 99-cysteine 114, cysteine 113-cysteine 124, cysteine 148-cysteine 193, cysteine 192-cysteine 201, cysteine 224-cysteine 270, cysteine 269-cysteine 277, cysteine 289-cysteine 303, and cysteine 302-cysteine 314. Phosphoserine is present on residues serine 111 and serine 115. N-linked (GlcNAc...) asparagine glycans are attached at residues asparagine 197 and asparagine 251. Serine 345 bears the Phosphoserine mark. 7 cysteine pairs are disulfide-bonded: cysteine 385-cysteine 394, cysteine 417-cysteine 463, cysteine 462-cysteine 473, cysteine 486-cysteine 502, cysteine 501-cysteine 512, cysteine 539-cysteine 584, and cysteine 583-cysteine 592. Serine 445 is modified (phosphoserine).

The protein belongs to the ALB/AFP/VDB family. In terms of assembly, dimeric and trimeric forms have been found in addition to the monomeric form. In terms of processing, sulfated. As to expression, plasma.

The protein localises to the secreted. Binds copper, nickel, and fatty acids as well as, and bilirubin less well than, serum albumin. The protein is Alpha-fetoprotein (AFP) of Bos taurus (Bovine).